Here is a 276-residue protein sequence, read N- to C-terminus: MRNIGIIINKEKDKENKILNLVILKVKEYLNPDEIKVIDQFYKGDYKDLMSLDLLIVLGGDGTLLGVARKFSTVIDTPILGINIGNLGFLVTAEISELDEALYRIKVGDYKVEERMLLSCTIEGVTCSEERALNDIVVARGTLSRMAQYEVFINDELYATFKGDGVIISTPVGSTAYSFSAGGPLIMPDLQIVSIVPICPHTPNSRPMIIDGNNKVRVKPLINESDVFVTIDGQKALKLEKHNEVLIKKAKEFFRIISFDNKSYFKVLRKKLFKIE.

Asp-61 serves as the catalytic Proton acceptor. Residues 61–62 (DG), 134–135 (ND), Arg-145, Lys-162, Asp-164, Val-172, 175–180 (TAYSFS), and Gln-234 each bind NAD(+).

This sequence belongs to the NAD kinase family. The cofactor is a divalent metal cation.

It localises to the cytoplasm. The enzyme catalyses NAD(+) + ATP = ADP + NADP(+) + H(+). Functionally, involved in the regulation of the intracellular balance of NAD and NADP, and is a key enzyme in the biosynthesis of NADP. Catalyzes specifically the phosphorylation on 2'-hydroxyl of the adenosine moiety of NAD to yield NADP. The polypeptide is NAD kinase (Clostridium perfringens (strain 13 / Type A)).